A 471-amino-acid chain; its full sequence is L-amino acid dehydrogenase (471 aa).

Residue Gly31 participates in Mg(2+) binding. Ser33 is a binding site for FAD. Residue Gly34 coordinates Mg(2+). Positions 52, 60, and 256 each coordinate FAD. Residue Ala283 coordinates Mg(2+). Phe453 contacts FAD.

This sequence belongs to the flavin monoamine oxidase family. Requires FAD as cofactor. Mg(2+) serves as cofactor.

The protein localises to the cellular thylakoid membrane. The enzyme catalyses a plastoquinone + an L-alpha-amino acid + H2O = a plastoquinol + a 2-oxocarboxylate + NH4(+). It carries out the reaction a plastoquinone + L-arginine + H2O = a plastoquinol + 5-guanidino-2-oxopentanoate + NH4(+). The protein operates within amino-acid degradation; L-arginine degradation. With respect to regulation, inhibited by Ca(2+) and other cations such as Ni(2+), Co(2+) and Zn(2+). The inhibition by o-phenanthroline and salicylhydroxamic acid suggests the presence of a metal cofactor besides FAD in the enzyme. The L-arginine-stimulated O(2) consumption involving slr0782 is inhibited by inhibitors of the respiratory electron transport chain, such as KCN and 2,5-dibromo-3-methyl-6-isopropyl-p-benzoquinone, which indicates a participation of the cytochrome b6/f complex and of a cytochrome oxidase. L-amino acid dehydrogenase with broad substrate specificity. Catalyzes the oxidative deamination of various L-amino acids, L-Arg and L-Cys being the best substrates in vitro. Likely functions mainly as an L-arginine dehydrogenase in vivo. Probably feeds electrons from L-arginine oxidation and also from the oxidation of other L-amino acids into the respiratory electron transport chain associated to the thylakoid membrane, and does not directly interact with molecular oxygen but donates electrons to the plastoquinone pool. Cannot use D-amino acids as substrates. This chain is L-amino acid dehydrogenase, found in Synechocystis sp. (strain ATCC 27184 / PCC 6803 / Kazusa).